We begin with the raw amino-acid sequence, 98 residues long: Flagellar hook-basal body complex protein FliE (98 aa).

A compositionally biased stretch (low complexity) spans 1–23; sequence MNNINDLRLNNNISNTNKSQNST. Residues 1 to 24 form a disordered region; sequence MNNINDLRLNNNISNTNKSQNSTG.

It belongs to the FliE family.

It is found in the bacterial flagellum basal body. In Campylobacter jejuni subsp. jejuni serotype O:2 (strain ATCC 700819 / NCTC 11168), this protein is Flagellar hook-basal body complex protein FliE.